A 227-amino-acid polypeptide reads, in one-letter code: Uracil-DNA glycosylase (227 aa).

Aspartate 64 serves as the catalytic Proton acceptor.

The protein belongs to the uracil-DNA glycosylase (UDG) superfamily. UNG family.

The protein resides in the cytoplasm. It catalyses the reaction Hydrolyzes single-stranded DNA or mismatched double-stranded DNA and polynucleotides, releasing free uracil.. Its function is as follows. Excises uracil residues from the DNA which can arise as a result of misincorporation of dUMP residues by DNA polymerase or due to deamination of cytosine. In Serratia proteamaculans (strain 568), this protein is Uracil-DNA glycosylase.